Reading from the N-terminus, the 321-residue chain is Probable 2-oxoglutarate-dependent dioxygenase AOP1.2 (321 aa).

The Fe2OG dioxygenase domain maps to 165–270 (TYYLTRLMKY…RYSTGLFSIP (106 aa)). Fe cation-binding residues include His-194, Asp-196, and His-251. Arg-261 contacts 2-oxoglutarate.

The protein belongs to the iron/ascorbate-dependent oxidoreductase family. The cofactor is Fe(2+).

Probable 2-oxoglutarate-dependent dioxygenase that may be involved in glucosinolates biosynthesis. May play a role in the production of aliphatic glucosinolates. The protein is Probable 2-oxoglutarate-dependent dioxygenase AOP1.2 (AOP1.2) of Arabidopsis thaliana (Mouse-ear cress).